A 434-amino-acid chain; its full sequence is Glutamyl-tRNA reductase (434 aa).

Substrate is bound by residues 49–52 (TCNR), Ser-109, 114–116 (EPQ), and Gln-120. Residue Cys-50 is the Nucleophile of the active site. 189–194 (GAGEMC) lines the NADP(+) pocket.

Belongs to the glutamyl-tRNA reductase family. Homodimer.

It carries out the reaction (S)-4-amino-5-oxopentanoate + tRNA(Glu) + NADP(+) = L-glutamyl-tRNA(Glu) + NADPH + H(+). It functions in the pathway porphyrin-containing compound metabolism; protoporphyrin-IX biosynthesis; 5-aminolevulinate from L-glutamyl-tRNA(Glu): step 1/2. Functionally, catalyzes the NADPH-dependent reduction of glutamyl-tRNA(Glu) to glutamate 1-semialdehyde (GSA). The protein is Glutamyl-tRNA reductase of Citrifermentans bemidjiense (strain ATCC BAA-1014 / DSM 16622 / JCM 12645 / Bem) (Geobacter bemidjiensis).